The primary structure comprises 282 residues: Aquaporin NIP1-1 (282 aa).

The next 2 membrane-spanning stretches (helical) occupy residues 46 to 66 and 74 to 94; these read IIAE…AVTI and ITFP…VYAV. The NPA 1 signature appears at 103-105; the sequence is NPA. Transmembrane regions (helical) follow at residues 125 to 145, 162 to 182, and 186 to 206; these read VLAQ…MFGG, SLVI…GVAT, and AIGE…VLIA. An NPA 2 motif is present at residues 215-217; that stretch reads NPA. The chain crosses the membrane as a helical span at residues 232–252; it reads IWVYVVGPVVGAVAGAWAYNL.

This sequence belongs to the MIP/aquaporin (TC 1.A.8) family. NIP (TC 1.A.8.12) subfamily.

It is found in the membrane. Its function is as follows. Aquaporins facilitate the transport of water and small neutral solutes across cell membranes. This chain is Aquaporin NIP1-1 (NIP1-1), found in Zea mays (Maize).